A 561-amino-acid polypeptide reads, in one-letter code: uncharacterized protein (561 aa).

Residues 1–24 form the signal peptide; it reads MELGAWRSILYIAFLFAITRHAFC. Over 25–509 the chain is Lumenal; it reads KAVNLVHSPE…GYVYLSEIKQ (485 aa). The chain crosses the membrane as a helical span at residues 510 to 530; the sequence is YSSLILISLWISLILFVSFLN. The Cytoplasmic portion of the chain corresponds to 531–561; it reads RRLILHYSFESVHQLKTLTRKFIYSSLLKQD.

It is found in the endoplasmic reticulum membrane. The protein localises to the golgi apparatus membrane. This is an uncharacterized protein from Schizosaccharomyces pombe (strain 972 / ATCC 24843) (Fission yeast).